The chain runs to 162 residues: Ribosome maturation factor RimP (162 aa).

Belongs to the RimP family.

It is found in the cytoplasm. Required for maturation of 30S ribosomal subunits. The chain is Ribosome maturation factor RimP from Beutenbergia cavernae (strain ATCC BAA-8 / DSM 12333 / CCUG 43141 / JCM 11478 / NBRC 16432 / NCIMB 13614 / HKI 0122).